Reading from the N-terminus, the 487-residue chain is Ribosomal protein uS12 methylthiotransferase RimO (487 aa).

One can recognise an MTTase N-terminal domain in the interval 38–149 (PTVAFAHLGC…IVEVLEQVEA (112 aa)). Residues cysteine 47, cysteine 83, cysteine 112, cysteine 187, cysteine 191, and cysteine 194 each coordinate [4Fe-4S] cluster. The Radical SAM core domain maps to 173 to 402 (TTSEAVAYLK…MEAQQAISAE (230 aa)). A TRAM domain is found at 405-476 (GAWVGRIVDV…IYDLEGEVVG (72 aa)).

It belongs to the methylthiotransferase family. RimO subfamily. It depends on [4Fe-4S] cluster as a cofactor.

Its subcellular location is the cytoplasm. It catalyses the reaction L-aspartate(89)-[ribosomal protein uS12]-hydrogen + (sulfur carrier)-SH + AH2 + 2 S-adenosyl-L-methionine = 3-methylsulfanyl-L-aspartate(89)-[ribosomal protein uS12]-hydrogen + (sulfur carrier)-H + 5'-deoxyadenosine + L-methionine + A + S-adenosyl-L-homocysteine + 2 H(+). Its function is as follows. Catalyzes the methylthiolation of an aspartic acid residue of ribosomal protein uS12. In Synechococcus sp. (strain RCC307), this protein is Ribosomal protein uS12 methylthiotransferase RimO.